We begin with the raw amino-acid sequence, 76 residues long: ATP synthase subunit 9, mitochondrial (76 aa).

Met1 is modified (N-formylmethionine). The next 2 helical transmembrane spans lie at 14 to 34 (ISTI…AALI) and 52 to 72 (ILGF…SFLL).

The protein belongs to the ATPase C chain family. In terms of assembly, F-type ATPases have 2 components, CF(1) - the catalytic core - and CF(0) - the membrane proton channel. In yeast, the dimeric form of ATP synthase consists of 18 polypeptides: alpha, beta, gamma, delta, epsilon, 4 (B), 5 (OSCP), 6 (A), 8, 9 (C), d, E (Tim11), f, g, h, i, j and k.

It localises to the mitochondrion membrane. Its function is as follows. Mitochondrial membrane ATP synthase (F(1)F(0) ATP synthase or Complex V) produces ATP from ADP in the presence of a proton gradient across the membrane which is generated by electron transport complexes of the respiratory chain. F-type ATPases consist of two structural domains, F(1) - containing the extramembraneous catalytic core and F(0) - containing the membrane proton channel, linked together by a central stalk and a peripheral stalk. During catalysis, ATP synthesis in the catalytic domain of F(1) is coupled via a rotary mechanism of the central stalk subunits to proton translocation. Part of the complex F(0) domain. A homomeric c-ring of probably 10 subunits is part of the complex rotary element. The polypeptide is ATP synthase subunit 9, mitochondrial (ATP9) (Saccharomyces paradoxus (Yeast)).